A 417-amino-acid chain; its full sequence is 4-hydroxy-3-methylbut-2-en-1-yl diphosphate synthase (flavodoxin) (417 aa).

C303, C306, C349, and E356 together coordinate [4Fe-4S] cluster.

It belongs to the IspG family. [4Fe-4S] cluster serves as cofactor.

It catalyses the reaction (2E)-4-hydroxy-3-methylbut-2-enyl diphosphate + oxidized [flavodoxin] + H2O + 2 H(+) = 2-C-methyl-D-erythritol 2,4-cyclic diphosphate + reduced [flavodoxin]. The protein operates within isoprenoid biosynthesis; isopentenyl diphosphate biosynthesis via DXP pathway; isopentenyl diphosphate from 1-deoxy-D-xylulose 5-phosphate: step 5/6. Its function is as follows. Converts 2C-methyl-D-erythritol 2,4-cyclodiphosphate (ME-2,4cPP) into 1-hydroxy-2-methyl-2-(E)-butenyl 4-diphosphate. The chain is 4-hydroxy-3-methylbut-2-en-1-yl diphosphate synthase (flavodoxin) from Mesorhizobium japonicum (strain LMG 29417 / CECT 9101 / MAFF 303099) (Mesorhizobium loti (strain MAFF 303099)).